Reading from the N-terminus, the 360-residue chain is Dehydrogenase mokE (360 aa).

50–53 (SDTK) lines the NADP(+) pocket. 134 to 141 (AGISTAGL) contacts substrate. Residues 173-176 (STAT), 196-199 (SPHN), tyrosine 214, 261-262 (LN), and threonine 279 each bind NADP(+). Substrate is bound at residue 281–285 (GPTIF). 350–351 (LS) lines the NADP(+) pocket.

This sequence belongs to the zinc-containing alcohol dehydrogenase family. As to quaternary structure, monomer.

Its pathway is polyketide biosynthesis; lovastatin biosynthesis. Functionally, dehydrogenase; part of the gene cluster that mediates the biosynthesis of monakolin K, also known as lovastatin, and which acts as a potent competitive inhibitor of HMG-CoA reductase. Monakolin K biosynthesis is performed in two stages. The first stage is catalyzed by the nonaketide synthase mokA, which belongs to type I polyketide synthases and catalyzes the iterative nine-step formation of the polyketide. This PKS stage is completed by the action of dehydrogenase mokE, which catalyzes the NADPH-dependent reduction of the unsaturated tetra-, penta- and heptaketide intermediates that arise during the mokA-mediated biosynthesis of the nonaketide chain and leads to dihydromonacolin L. Covalently bound dihydromonacolin L is released from mokA by the mokD esterase. Conversion of dihydromonacolin L into monacolin L and then monacolin J is subsequently performed with the participation of molecular oxygen and P450 monoogygenase mokC. Finally, mokF performs the conversion of monacoline J to monacoline K through the addition of the side-chain diketide moiety (2R)-2-methylbutanoate produced by the diketide synthase mokB. The sequence is that of Dehydrogenase mokE from Monascus pilosus (Red mold).